Reading from the N-terminus, the 419-residue chain is UDP-N-acetylglucosamine 1-carboxyvinyltransferase (419 aa).

22 to 23 (KN) is a binding site for phosphoenolpyruvate. Arginine 95 provides a ligand contact to UDP-N-acetyl-alpha-D-glucosamine. Catalysis depends on cysteine 119, which acts as the Proton donor. The residue at position 119 (cysteine 119) is a 2-(S-cysteinyl)pyruvic acid O-phosphothioketal. UDP-N-acetyl-alpha-D-glucosamine is bound by residues aspartate 308 and isoleucine 330.

Belongs to the EPSP synthase family. MurA subfamily.

The protein localises to the cytoplasm. It catalyses the reaction phosphoenolpyruvate + UDP-N-acetyl-alpha-D-glucosamine = UDP-N-acetyl-3-O-(1-carboxyvinyl)-alpha-D-glucosamine + phosphate. Its pathway is cell wall biogenesis; peptidoglycan biosynthesis. Its function is as follows. Cell wall formation. Adds enolpyruvyl to UDP-N-acetylglucosamine. In Rickettsia bellii (strain OSU 85-389), this protein is UDP-N-acetylglucosamine 1-carboxyvinyltransferase.